A 311-amino-acid polypeptide reads, in one-letter code: Lipoyl synthase (311 aa).

[4Fe-4S] cluster is bound by residues cysteine 47, cysteine 52, cysteine 58, cysteine 73, cysteine 77, cysteine 80, and serine 286. In terms of domain architecture, Radical SAM core spans tryptophan 59–phenylalanine 276.

The protein belongs to the radical SAM superfamily. Lipoyl synthase family. Requires [4Fe-4S] cluster as cofactor.

It is found in the cytoplasm. It catalyses the reaction [[Fe-S] cluster scaffold protein carrying a second [4Fe-4S](2+) cluster] + N(6)-octanoyl-L-lysyl-[protein] + 2 oxidized [2Fe-2S]-[ferredoxin] + 2 S-adenosyl-L-methionine + 4 H(+) = [[Fe-S] cluster scaffold protein] + N(6)-[(R)-dihydrolipoyl]-L-lysyl-[protein] + 4 Fe(3+) + 2 hydrogen sulfide + 2 5'-deoxyadenosine + 2 L-methionine + 2 reduced [2Fe-2S]-[ferredoxin]. The protein operates within protein modification; protein lipoylation via endogenous pathway; protein N(6)-(lipoyl)lysine from octanoyl-[acyl-carrier-protein]: step 2/2. Its function is as follows. Catalyzes the radical-mediated insertion of two sulfur atoms into the C-6 and C-8 positions of the octanoyl moiety bound to the lipoyl domains of lipoate-dependent enzymes, thereby converting the octanoylated domains into lipoylated derivatives. The protein is Lipoyl synthase of Chlamydia trachomatis serovar A (strain ATCC VR-571B / DSM 19440 / HAR-13).